The sequence spans 207 residues: Guanylate kinase (207 aa).

Residues 5–184 (GNLFIVSAPS…ALADLKSIIF (180 aa)) form the Guanylate kinase-like domain. 12–19 (APSGAGKS) serves as a coordination point for ATP.

Belongs to the guanylate kinase family.

Its subcellular location is the cytoplasm. The enzyme catalyses GMP + ATP = GDP + ADP. Its function is as follows. Essential for recycling GMP and indirectly, cGMP. This is Guanylate kinase from Shewanella denitrificans (strain OS217 / ATCC BAA-1090 / DSM 15013).